The sequence spans 550 residues: Chaperonin GroEL 2 (550 aa).

ATP-binding positions include 30-33, Lys51, 87-91, Gly415, and Asp496; these read TLGP and DGTTT.

The protein belongs to the chaperonin (HSP60) family. In terms of assembly, forms a cylinder of 14 subunits composed of two heptameric rings stacked back-to-back. Interacts with the co-chaperonin GroES.

It localises to the cytoplasm. The catalysed reaction is ATP + H2O + a folded polypeptide = ADP + phosphate + an unfolded polypeptide.. Together with its co-chaperonin GroES, plays an essential role in assisting protein folding. The GroEL-GroES system forms a nano-cage that allows encapsulation of the non-native substrate proteins and provides a physical environment optimized to promote and accelerate protein folding. This Bradyrhizobium diazoefficiens (strain JCM 10833 / BCRC 13528 / IAM 13628 / NBRC 14792 / USDA 110) protein is Chaperonin GroEL 2.